The chain runs to 137 residues: Large ribosomal subunit protein uL16 (137 aa).

The protein belongs to the universal ribosomal protein uL16 family. Part of the 50S ribosomal subunit.

Binds 23S rRNA and is also seen to make contacts with the A and possibly P site tRNAs. The sequence is that of Large ribosomal subunit protein uL16 from Pseudomonas syringae pv. tomato (strain ATCC BAA-871 / DC3000).